A 66-amino-acid chain; its full sequence is Stress-induced protein KIN2 (66 aa).

The span at 1–10 (MSETNKNAFQ) shows a compositional bias: polar residues. A disordered region spans residues 1 to 20 (MSETNKNAFQAGQAAGKAEE). 2 repeats span residues 31–35 (DAAAA) and 49–53 (DAAVG).

Interacts with DEK3. As to expression, expressed at high levels in embryos and mature seeds.

The polypeptide is Stress-induced protein KIN2 (Arabidopsis thaliana (Mouse-ear cress)).